Here is a 490-residue protein sequence, read N- to C-terminus: Probable cytosol aminopeptidase (490 aa).

Residues Lys256 and Asp261 each coordinate Mn(2+). Lys268 is a catalytic residue. Mn(2+)-binding residues include Asp280, Asp340, and Glu342. Arg344 is an active-site residue.

This sequence belongs to the peptidase M17 family. The cofactor is Mn(2+).

It is found in the cytoplasm. The catalysed reaction is Release of an N-terminal amino acid, Xaa-|-Yaa-, in which Xaa is preferably Leu, but may be other amino acids including Pro although not Arg or Lys, and Yaa may be Pro. Amino acid amides and methyl esters are also readily hydrolyzed, but rates on arylamides are exceedingly low.. It carries out the reaction Release of an N-terminal amino acid, preferentially leucine, but not glutamic or aspartic acids.. Functionally, presumably involved in the processing and regular turnover of intracellular proteins. Catalyzes the removal of unsubstituted N-terminal amino acids from various peptides. The sequence is that of Probable cytosol aminopeptidase from Prochlorococcus marinus (strain MIT 9313).